Consider the following 499-residue polypeptide: Potassium channel subfamily K member 5 (499 aa).

The Cytoplasmic segment spans residues 1–7 (MVDRGPL). A helical transmembrane segment spans residues 8–26 (LTSAIIFYLAIGAAIFEVL). N77 is a glycosylation site (N-linked (GlcNAc...) asparagine). Residues 85-112 (WPNAMIFAATVITTIGYGNVAPKTPAGR) constitute an intramembrane region (pore-forming). Positions 98, 99, 100, and 101 each coordinate K(+). The selectivity filter 1 stretch occupies residues 98–103 (TIGYGN). A helical transmembrane segment spans residues 113–133 (LFCVFYGLFGVPLCLTWISAL). Topologically, residues 134–157 (GKFFGGRAKRLGQFLTKRGVSLRK) are cytoplasmic. Residues 158 to 180 (AQITCTVIFIVWGVLVHLVIPPF) form a helical membrane-spanning segment. Positions 190-215 (YIEGLYYSFITISTIGFGDFVAGVNP) form an intramembrane region, pore-forming. Residues T203, I204, G205, and F206 each coordinate K(+). Residues 203–208 (TIGFGD) form a selectivity filter 2 region. Residues 230–250 (WIYLGLAWLSLFVNWKVSMFV) form a helical membrane-spanning segment. Over 251–325 (EVHKAIKKRR…SGGGETGPGP (75 aa)) the chain is Cytoplasmic. 3 disordered regions span residues 312–335 (AMKT…GGLP), 360–388 (QTLR…SPAP), and 428–499 (GLSD…PKGT). A compositionally biased stretch (gly residues) spans 316-334 (SGGGETGPGPGLGPQGGGL). Positions 370–382 (RSPDEEAVARAPE) are enriched in basic and acidic residues. S371 is subject to Phosphoserine. The segment covering 466–480 (SSSESTFTSTESELS) has biased composition (low complexity).

Belongs to the two pore domain potassium channel (TC 1.A.1.8) family. As to quaternary structure, homodimer; disulfide-linked. Heterodimer with KCNK16 and KCNK17. In terms of tissue distribution, abundant expression in kidney, also detected in liver, placenta and small intestine. In the kidney, expression is restricted to the distal tubules and collecting ducts. Not expressed in proximal tubules or glomeruli. Expressed in pancreas, in both endocrine (alpha, beta, gamma, delta, and epsilon) and exocrine (acinar and ductal) cells.

It is found in the membrane. It carries out the reaction K(+)(in) = K(+)(out). Its activity is regulated as follows. The channel conductance is stimulated by extracellular alkaline pH. Inhibited by quinine, quinidine and external acidification. K(+) channel that conducts voltage-dependent outward rectifying currents upon membrane depolarization. Voltage sensing is coupled to K(+) electrochemical gradient in an 'ion flux gating' mode where outward but not inward ion flow opens the gate. Homo- and heterodimerizes to form functional channels with distinct regulatory and gating properties. The sequence is that of Potassium channel subfamily K member 5 from Homo sapiens (Human).